A 374-amino-acid chain; its full sequence is Lipid-A-disaccharide synthase (374 aa).

It belongs to the LpxB family.

It catalyses the reaction a lipid X + a UDP-2-N,3-O-bis[(3R)-3-hydroxyacyl]-alpha-D-glucosamine = a lipid A disaccharide + UDP + H(+). It participates in bacterial outer membrane biogenesis; LPS lipid A biosynthesis. Condensation of UDP-2,3-diacylglucosamine and 2,3-diacylglucosamine-1-phosphate to form lipid A disaccharide, a precursor of lipid A, a phosphorylated glycolipid that anchors the lipopolysaccharide to the outer membrane of the cell. The chain is Lipid-A-disaccharide synthase from Pseudomonas fluorescens (strain ATCC BAA-477 / NRRL B-23932 / Pf-5).